Here is a 276-residue protein sequence, read N- to C-terminus: Glucosamine-6-phosphate deaminase 2 (276 aa).

The Proton acceptor; for enolization step role is filled by aspartate 72. The stretch at 103 to 131 (NAHILDGNAADLQAECDAFEEKIKEAGGI) forms a coiled coil. The active-site For ring-opening step is aspartate 141. The Proton acceptor; for ring-opening step role is filled by histidine 143. Glutamate 148 serves as the catalytic For ring-opening step. Threonine 161 is subject to Phosphothreonine.

The protein belongs to the glucosamine/galactosamine-6-phosphate isomerase family. As to quaternary structure, homohexamer.

The protein resides in the cytoplasm. It catalyses the reaction alpha-D-glucosamine 6-phosphate + H2O = beta-D-fructose 6-phosphate + NH4(+). Its pathway is nucleotide-sugar biosynthesis; UDP-N-acetyl-alpha-D-glucosamine biosynthesis; alpha-D-glucosamine 6-phosphate from D-fructose 6-phosphate: step 1/1. Its activity is regulated as follows. Allosterically activated by N-acetylglucosamine-6-phosphate (GlcNAc6P). Functionally, catalyzes the reversible conversion of alpha-D-glucosamine 6-phosphate (GlcN-6P) into beta-D-fructose 6-phosphate (Fru-6P) and ammonium ion, a regulatory reaction step in de novo uridine diphosphate-N-acetyl-alpha-D-glucosamine (UDP-GlcNAc) biosynthesis via hexosamine pathway. Deamination is coupled to aldo-keto isomerization mediating the metabolic flux from UDP-GlcNAc toward Fru-6P. At high ammonium level can drive amination and isomerization of Fru-6P toward hexosamines and UDP-GlcNAc synthesis. Has a role in fine tuning the metabolic fluctuations of cytosolic UDP-GlcNAc and their effects on hyaluronan synthesis that occur during tissue remodeling. The polypeptide is Glucosamine-6-phosphate deaminase 2 (Mus musculus (Mouse)).